Here is a 97-residue protein sequence, read N- to C-terminus: Integration host factor subunit alpha (97 aa).

Belongs to the bacterial histone-like protein family. Heterodimer of an alpha and a beta chain.

In terms of biological role, this protein is one of the two subunits of integration host factor, a specific DNA-binding protein that functions in genetic recombination as well as in transcriptional and translational control. In Histophilus somni (strain 2336) (Haemophilus somnus), this protein is Integration host factor subunit alpha.